The primary structure comprises 153 residues: Mitotic-spindle organizing protein 2 (153 aa).

The tract at residues 80–153 (KVSETSTGDA…SSSSSQLTSN (74 aa)) is disordered. 2 stretches are compositionally biased toward polar residues: residues 81–99 (VSET…TAVP) and 107–133 (KMSS…SATR). Low complexity predominate over residues 134-153 (GQKSTKSSGSSSSSSQLTSN).

Belongs to the MOZART2 family. Part of the gamma-tubulin complex. Interacts with TUBG1.

The protein resides in the cytoplasm. The protein localises to the cytoskeleton. It is found in the microtubule organizing center. It localises to the centrosome. Its subcellular location is the spindle. The sequence is that of Mitotic-spindle organizing protein 2 (mzt2) from Danio rerio (Zebrafish).